Consider the following 274-residue polypeptide: Penicillin-insensitive murein endopeptidase (274 aa).

Positions 1-19 (MNKTAIALLALLASSASLA) are cleaved as a signal peptide. Intrachain disulfides connect cysteine 44–cysteine 265, cysteine 187–cysteine 235, and cysteine 216–cysteine 223. Residues histidine 110, histidine 113, aspartate 120, aspartate 147, histidine 150, and histidine 211 each contribute to the Zn(2+) site. The segment at 227–274 (PLPPPGDGCGAELQSWFEPPKPGTTKPEKKTPPPLPPSCQALLDEHVI) is disordered.

This sequence belongs to the peptidase M74 family. Dimer. Zn(2+) is required as a cofactor.

The protein resides in the periplasm. Its function is as follows. Murein endopeptidase that cleaves the D-alanyl-meso-2,6-diamino-pimelyl amide bond that connects peptidoglycan strands. Likely plays a role in the removal of murein from the sacculus. The chain is Penicillin-insensitive murein endopeptidase from Escherichia coli O1:K1 / APEC.